The chain runs to 626 residues: UvrABC system protein C (626 aa).

The GIY-YIG domain maps to 25–104 (TSPGVYRFSN…IKELKPRYNV (80 aa)). A UVR domain is found at 218 to 253 (SALLRDLSAEMQKKAKELKFEEAAALKAQIEGLKRY).

It belongs to the UvrC family. As to quaternary structure, interacts with UvrB in an incision complex.

Its subcellular location is the cytoplasm. In terms of biological role, the UvrABC repair system catalyzes the recognition and processing of DNA lesions. UvrC both incises the 5' and 3' sides of the lesion. The N-terminal half is responsible for the 3' incision and the C-terminal half is responsible for the 5' incision. The protein is UvrABC system protein C of Chlorobaculum tepidum (strain ATCC 49652 / DSM 12025 / NBRC 103806 / TLS) (Chlorobium tepidum).